The following is a 223-amino-acid chain: uncharacterized protein (223 aa).

It to M.jannaschii MJ1453.

This is an uncharacterized protein from Methanothermobacter thermautotrophicus (strain ATCC 29096 / DSM 1053 / JCM 10044 / NBRC 100330 / Delta H) (Methanobacterium thermoautotrophicum).